The sequence spans 129 residues: Large ribosomal subunit protein bL12 (129 aa).

Residues 95–123 (MVESTPKSIKEGVSKEDAEEAKKSLEDAG) show a composition bias toward basic and acidic residues. The interval 95–129 (MVESTPKSIKEGVSKEDAEEAKKSLEDAGGKASLK) is disordered.

This sequence belongs to the bacterial ribosomal protein bL12 family. In terms of assembly, homodimer. Part of the ribosomal stalk of the 50S ribosomal subunit. Forms a multimeric L10(L12)X complex, where L10 forms an elongated spine to which 2 to 4 L12 dimers bind in a sequential fashion. Binds GTP-bound translation factors.

In terms of biological role, forms part of the ribosomal stalk which helps the ribosome interact with GTP-bound translation factors. Is thus essential for accurate translation. This is Large ribosomal subunit protein bL12 from Acaryochloris marina (strain MBIC 11017).